Consider the following 748-residue polypeptide: Elongation factor G, mitochondrial (748 aa).

The N-terminal 14 residues, 1–14 (MTISSFLRVRHSLA), are a transit peptide targeting the mitochondrion. Residues 40 to 318 (ERIRNIGISA…VLNYLPHPGE (279 aa)) enclose the tr-type G domain. Residues 49 to 56 (AHIDSGKT), 116 to 120 (DTPGH), and 170 to 173 (NKLD) contribute to the GTP site.

This sequence belongs to the TRAFAC class translation factor GTPase superfamily. Classic translation factor GTPase family. EF-G/EF-2 subfamily.

Its subcellular location is the mitochondrion. Its pathway is protein biosynthesis; polypeptide chain elongation. Functionally, mitochondrial GTPase that catalyzes the GTP-dependent ribosomal translocation step during translation elongation. During this step, the ribosome changes from the pre-translocational (PRE) to the post-translocational (POST) state as the newly formed A-site-bound peptidyl-tRNA and P-site-bound deacylated tRNA move to the P and E sites, respectively. Catalyzes the coordinated movement of the two tRNA molecules, the mRNA and conformational changes in the ribosome. This is Elongation factor G, mitochondrial from Aedes aegypti (Yellowfever mosquito).